Here is a 457-residue protein sequence, read N- to C-terminus: Argininosuccinate lyase (457 aa).

The protein belongs to the lyase 1 family. Argininosuccinate lyase subfamily.

Its subcellular location is the cytoplasm. It carries out the reaction 2-(N(omega)-L-arginino)succinate = fumarate + L-arginine. It functions in the pathway amino-acid biosynthesis; L-arginine biosynthesis; L-arginine from L-ornithine and carbamoyl phosphate: step 3/3. The sequence is that of Argininosuccinate lyase from Escherichia coli O139:H28 (strain E24377A / ETEC).